The following is a 100-amino-acid chain: Glutamyl-tRNA(Gln) amidotransferase subunit C (100 aa).

It belongs to the GatC family. In terms of assembly, heterotrimer of A, B and C subunits.

The catalysed reaction is L-glutamyl-tRNA(Gln) + L-glutamine + ATP + H2O = L-glutaminyl-tRNA(Gln) + L-glutamate + ADP + phosphate + H(+). It carries out the reaction L-aspartyl-tRNA(Asn) + L-glutamine + ATP + H2O = L-asparaginyl-tRNA(Asn) + L-glutamate + ADP + phosphate + 2 H(+). Allows the formation of correctly charged Asn-tRNA(Asn) or Gln-tRNA(Gln) through the transamidation of misacylated Asp-tRNA(Asn) or Glu-tRNA(Gln) in organisms which lack either or both of asparaginyl-tRNA or glutaminyl-tRNA synthetases. The reaction takes place in the presence of glutamine and ATP through an activated phospho-Asp-tRNA(Asn) or phospho-Glu-tRNA(Gln). In Streptococcus pyogenes serotype M1, this protein is Glutamyl-tRNA(Gln) amidotransferase subunit C.